The sequence spans 92 residues: RNA-binding protein Hfq (92 aa).

The region spanning 9–68 is the Sm domain; sequence DPFLNALRRERVPVSIYLVNGIKLQGQVESFDQFVILLKNTVSQMVYKHAISTVVPSRPF.

The protein belongs to the Hfq family. Homohexamer.

Functionally, RNA chaperone that binds small regulatory RNA (sRNAs) and mRNAs to facilitate mRNA translational regulation in response to envelope stress, environmental stress and changes in metabolite concentrations. Also binds with high specificity to tRNAs. In Shewanella halifaxensis (strain HAW-EB4), this protein is RNA-binding protein Hfq.